We begin with the raw amino-acid sequence, 347 residues long: FK506-binding protein-like (347 aa).

The segment at 1-24 is disordered; it reads METSPISPMNEKNTAQPQQREENA. Thr-3 bears the Phosphothreonine mark. TPR repeat units lie at residues 208-241, 250-283, and 284-317; these read AKEEHRRGTELFRAGNPQGAARCYGRALRLLLTL, TTLYANLAACQLLLGHPQLAAQSCDRVLEREPGH, and LKALYRRGVARAALGDLEKATADFKKVLAVDPKN.

As to quaternary structure, forms a ternary complex with CDKN1A/p21 and HSP90AB1/Hsp90.

Its function is as follows. May be involved in response to X-ray. Regulates p21 protein stability by binding to Hsp90 and p21. In Mus musculus (Mouse), this protein is FK506-binding protein-like (Fkbpl).